A 945-amino-acid chain; its full sequence is Leucine--tRNA ligase (945 aa).

A 'HIGH' region motif is present at residues 43-53 (PYPNGAVHIGH). The short motif at 638 to 642 (KMSKS) is the 'KMSKS' region element. K641 lines the ATP pocket.

Belongs to the class-I aminoacyl-tRNA synthetase family.

It is found in the cytoplasm. The enzyme catalyses tRNA(Leu) + L-leucine + ATP = L-leucyl-tRNA(Leu) + AMP + diphosphate. This chain is Leucine--tRNA ligase, found in Pyrobaculum islandicum (strain DSM 4184 / JCM 9189 / GEO3).